The sequence spans 207 residues: RNA chaperone ProQ (207 aa).

Positions 100 to 156 (TLAESKAKVQARRKEQAQKARDEEKSKPKTKKAPQQRRANKPQAQKPAKQPVETRAL) are disordered. Over residues 111–126 (RRKEQAQKARDEEKSK) the composition is skewed to basic and acidic residues. The span at 127 to 139 (PKTKKAPQQRRAN) shows a compositional bias: basic residues.

It belongs to the ProQ family.

The protein localises to the cytoplasm. In terms of biological role, RNA chaperone with significant RNA binding, RNA strand exchange and RNA duplexing activities. In Vibrio vulnificus (strain CMCP6), this protein is RNA chaperone ProQ.